Here is a 23-residue protein sequence, read N- to C-terminus: Magainin-BM2 (23 aa).

In terms of tissue distribution, expressed by the skin glands.

The protein resides in the secreted. Functionally, antimicrobial peptide. This Xenopus boumbaensis (Mawa clawed frog) protein is Magainin-BM2.